The following is a 429-amino-acid chain: Adenylosuccinate synthetase (429 aa).

GTP contacts are provided by residues 12 to 18 (GDEGKGK) and 40 to 42 (GHT). The active-site Proton acceptor is the Asp13. 2 residues coordinate Mg(2+): Asp13 and Gly40. IMP-binding positions include 13 to 16 (DEGK), 38 to 41 (NAGH), Thr128, Arg142, Gln223, Thr238, and Arg302. The active-site Proton donor is the His41. 298–304 (VNTGRKR) serves as a coordination point for substrate. GTP-binding positions include Arg304, 330 to 332 (KLD), and 412 to 414 (GVG).

This sequence belongs to the adenylosuccinate synthetase family. Homodimer. Mg(2+) serves as cofactor.

The protein localises to the cytoplasm. The enzyme catalyses IMP + L-aspartate + GTP = N(6)-(1,2-dicarboxyethyl)-AMP + GDP + phosphate + 2 H(+). It functions in the pathway purine metabolism; AMP biosynthesis via de novo pathway; AMP from IMP: step 1/2. Its function is as follows. Plays an important role in the de novo pathway of purine nucleotide biosynthesis. Catalyzes the first committed step in the biosynthesis of AMP from IMP. The sequence is that of Adenylosuccinate synthetase from Corynebacterium diphtheriae (strain ATCC 700971 / NCTC 13129 / Biotype gravis).